The sequence spans 206 residues: ATP-dependent Clp protease proteolytic subunit (206 aa).

S101 acts as the Nucleophile in catalysis. The active site involves H126.

Belongs to the peptidase S14 family. In terms of assembly, component of the chloroplastic Clp protease core complex.

It is found in the plastid. The protein resides in the chloroplast stroma. The catalysed reaction is Hydrolysis of proteins to small peptides in the presence of ATP and magnesium. alpha-casein is the usual test substrate. In the absence of ATP, only oligopeptides shorter than five residues are hydrolyzed (such as succinyl-Leu-Tyr-|-NHMec, and Leu-Tyr-Leu-|-Tyr-Trp, in which cleavage of the -Tyr-|-Leu- and -Tyr-|-Trp bonds also occurs).. Cleaves peptides in various proteins in a process that requires ATP hydrolysis. Has a chymotrypsin-like activity. Plays a major role in the degradation of misfolded proteins. This Solanum lycopersicum (Tomato) protein is ATP-dependent Clp protease proteolytic subunit.